The following is a 114-amino-acid chain: Class I hydrophobin 1 (114 aa).

The first 20 residues, 1-20, serve as a signal peptide directing secretion; the sequence is MQFTKMSAFATLALATLAAA. Disulfide bonds link C33/C93, C40/C87, C41/C74, and C94/C107.

It belongs to the fungal hydrophobin family. In terms of assembly, self-assembles to form functional amyloid fibrils called rodlets. Self-assembly into fibrillar rodlets occurs spontaneously at hydrophobic:hydrophilic interfaces and the rodlets further associate laterally to form amphipathic monolayers.

It is found in the secreted. Its subcellular location is the cell wall. Aerial growth, conidiation, and dispersal of filamentous fungi in the environment rely upon a capability of their secreting small amphipathic proteins called hydrophobins (HPBs) with low sequence identity. Class I can self-assemble into an outermost layer of rodlet bundles on aerial cell surfaces, conferring cellular hydrophobicity that supports fungal growth, development and dispersal; whereas Class II form highly ordered films at water-air interfaces through intermolecular interactions but contribute nothing to the rodlet structure. Pnh1 is a class I hydrophobin that might be involved in the attachment of the hydrophilic wall of hyphae to the hydrophobic surface of wood under inorganic phosphate (Pi)-deficient conditions and enable the mycelium to degrade efficiently the components of wood and to acquire nutrients containing Pi. This is Class I hydrophobin 1 from Pholiota nameko.